Reading from the N-terminus, the 514-residue chain is ATP synthase subunit alpha (514 aa).

An ATP-binding site is contributed by 170–177; sequence GDRQIGKT.

This sequence belongs to the ATPase alpha/beta chains family. In terms of assembly, F-type ATPases have 2 components, CF(1) - the catalytic core - and CF(0) - the membrane proton channel. CF(1) has five subunits: alpha(3), beta(3), gamma(1), delta(1), epsilon(1). CF(0) has three main subunits: a(1), b(2) and c(9-12). The alpha and beta chains form an alternating ring which encloses part of the gamma chain. CF(1) is attached to CF(0) by a central stalk formed by the gamma and epsilon chains, while a peripheral stalk is formed by the delta and b chains.

The protein localises to the cell inner membrane. The catalysed reaction is ATP + H2O + 4 H(+)(in) = ADP + phosphate + 5 H(+)(out). In terms of biological role, produces ATP from ADP in the presence of a proton gradient across the membrane. The alpha chain is a regulatory subunit. This is ATP synthase subunit alpha from Pseudomonas putida (strain ATCC 47054 / DSM 6125 / CFBP 8728 / NCIMB 11950 / KT2440).